The chain runs to 256 residues: Thiazole synthase (256 aa).

Residue K96 is the Schiff-base intermediate with DXP of the active site. 1-deoxy-D-xylulose 5-phosphate contacts are provided by residues G157, 184-185 (AG), and 206-207 (NT).

This sequence belongs to the ThiG family. In terms of assembly, homotetramer. Forms heterodimers with either ThiH or ThiS.

The protein resides in the cytoplasm. The enzyme catalyses [ThiS sulfur-carrier protein]-C-terminal-Gly-aminoethanethioate + 2-iminoacetate + 1-deoxy-D-xylulose 5-phosphate = [ThiS sulfur-carrier protein]-C-terminal Gly-Gly + 2-[(2R,5Z)-2-carboxy-4-methylthiazol-5(2H)-ylidene]ethyl phosphate + 2 H2O + H(+). Its pathway is cofactor biosynthesis; thiamine diphosphate biosynthesis. Its function is as follows. Catalyzes the rearrangement of 1-deoxy-D-xylulose 5-phosphate (DXP) to produce the thiazole phosphate moiety of thiamine. Sulfur is provided by the thiocarboxylate moiety of the carrier protein ThiS. In vitro, sulfur can be provided by H(2)S. The sequence is that of Thiazole synthase from Brucella melitensis biotype 2 (strain ATCC 23457).